Reading from the N-terminus, the 352-residue chain is Probable cytosolic iron-sulfur protein assembly protein CIAO1 homolog (352 aa).

WD repeat units lie at residues 14–53 (GHDD…PSEQ), 63–102 (CHTR…WEQV), 107–146 (GHEN…EFEC), 152–191 (GHSQ…WGCA), 200–240 (GHES…TSTP), 268–306 (HHRR…LTQP), and 319–352 (AHGA…WWLR).

It belongs to the WD repeat CIA1 family.

Functionally, essential component of the cytosolic iron-sulfur (Fe/S) protein assembly machinery. Required for the maturation of extramitochondrial Fe/S proteins. The polypeptide is Probable cytosolic iron-sulfur protein assembly protein CIAO1 homolog (Chlamydomonas reinhardtii (Chlamydomonas smithii)).